Here is a 267-residue protein sequence, read N- to C-terminus: Matrilysin (267 aa).

An N-terminal signal peptide occupies residues 1-17 (MRLTVLCAVCLLPGSLA). A propeptide spans 18-94 (LPLPQEAGGM…PRCGVPDVAE (77 aa)) (activation peptide). The short motif at 85–92 (PRCGVPDV) is the Cysteine switch element. Cys87 contacts Zn(2+). Position 153 (Asp153) interacts with Ca(2+). Positions 163 and 165 each coordinate Zn(2+). Residues Asp170, Gly171, Gly173, and Thr175 each coordinate Ca(2+). His178 is a binding site for Zn(2+). Ca(2+) contacts are provided by Gly185, Gly187, and Asp189. His191 contacts Zn(2+). Ca(2+) is bound by residues Asp193 and Glu196. Residue His214 participates in Zn(2+) binding. Residue Glu215 is part of the active site. Zn(2+) is bound by residues His218 and His224.

This sequence belongs to the peptidase M10A family. The cofactor is Ca(2+). Zn(2+) is required as a cofactor.

Its subcellular location is the secreted. The protein resides in the extracellular space. It is found in the extracellular matrix. The enzyme catalyses Cleavage of 14-Ala-|-Leu-15 and 16-Tyr-|-Leu-17 in B chain of insulin. No action on collagen types I, II, IV, V. Cleaves gelatin chain alpha2(I) &gt; alpha1(I).. Degrades casein, gelatins of types I, III, IV, and V, and fibronectin. Activates procollagenase. The sequence is that of Matrilysin (MMP7) from Homo sapiens (Human).